A 127-amino-acid chain; its full sequence is Ycf91-like protein (127 aa).

Belongs to the ycf91 family.

This chain is Ycf91-like protein, found in Nostoc sp. (strain PCC 7120 / SAG 25.82 / UTEX 2576).